Reading from the N-terminus, the 210-residue chain is N-(5'-phosphoribosyl)anthranilate isomerase (210 aa).

Belongs to the TrpF family.

It carries out the reaction N-(5-phospho-beta-D-ribosyl)anthranilate = 1-(2-carboxyphenylamino)-1-deoxy-D-ribulose 5-phosphate. The protein operates within amino-acid biosynthesis; L-tryptophan biosynthesis; L-tryptophan from chorismate: step 3/5. This Methanococcus aeolicus (strain ATCC BAA-1280 / DSM 17508 / OCM 812 / Nankai-3) protein is N-(5'-phosphoribosyl)anthranilate isomerase.